An 89-amino-acid chain; its full sequence is MAKKSKIAKAQKREALVAKYADKRAALKAAGDFIGLAALPKDSSPVRMHNRDLIDGRPHAYMREFGMSRLNFRQLAHKGQIPGVRKASW.

This sequence belongs to the universal ribosomal protein uS14 family. As to quaternary structure, part of the 30S ribosomal subunit. Contacts proteins S3 and S10.

Its function is as follows. Binds 16S rRNA, required for the assembly of 30S particles and may also be responsible for determining the conformation of the 16S rRNA at the A site. The chain is Small ribosomal subunit protein uS14 from Leuconostoc citreum (strain KM20).